The sequence spans 258 residues: Spindlin-2 (258 aa).

The segment at 1–47 is disordered; that stretch reads MKTPHKKATARQQTREIVDDHTLSASMRKKKISQKKQRGRPSSQTRR. A compositionally biased stretch (basic and acidic residues) spans 13–22; the sequence is QTREIVDDHT. Residues 27 to 39 are compositionally biased toward basic residues; sequence MRKKKISQKKQRG. Tudor-like domain regions lie at residues 50–99, 129–178, and 210–255; these read VGCR…LELH, IGKA…YQLL, and IGKH…YDLV. Histone H3K4me3 and H3R8me2a binding stretches follow at residues Glu138 and 246-248; that span reads DFH.

It belongs to the SPIN/STSY family. Interacts with C11orf84/SPINDOC.

It is found in the nucleus. Functionally, may be involved in the regulation of cell cycle progression. Exhibits H3K4me3-binding activity. This is Spindlin-2 (SPIN2) from Bos taurus (Bovine).